The following is a 119-amino-acid chain: Ribosome-binding factor A (119 aa).

Belongs to the RbfA family. In terms of assembly, monomer. Binds 30S ribosomal subunits, but not 50S ribosomal subunits or 70S ribosomes.

Its subcellular location is the cytoplasm. Its function is as follows. One of several proteins that assist in the late maturation steps of the functional core of the 30S ribosomal subunit. Associates with free 30S ribosomal subunits (but not with 30S subunits that are part of 70S ribosomes or polysomes). Required for efficient processing of 16S rRNA. May interact with the 5'-terminal helix region of 16S rRNA. The protein is Ribosome-binding factor A of Chlorobium luteolum (strain DSM 273 / BCRC 81028 / 2530) (Pelodictyon luteolum).